Here is a 303-residue protein sequence, read N- to C-terminus: Ribosomal RNA small subunit methyltransferase A (303 aa).

S-adenosyl-L-methionine contacts are provided by asparagine 37, valine 39, glycine 64, glutamate 85, aspartate 115, and asparagine 138.

Belongs to the class I-like SAM-binding methyltransferase superfamily. rRNA adenine N(6)-methyltransferase family. RsmA subfamily.

It is found in the cytoplasm. The enzyme catalyses adenosine(1518)/adenosine(1519) in 16S rRNA + 4 S-adenosyl-L-methionine = N(6)-dimethyladenosine(1518)/N(6)-dimethyladenosine(1519) in 16S rRNA + 4 S-adenosyl-L-homocysteine + 4 H(+). In terms of biological role, specifically dimethylates two adjacent adenosines (A1518 and A1519) in the loop of a conserved hairpin near the 3'-end of 16S rRNA in the 30S particle. May play a critical role in biogenesis of 30S subunits. The sequence is that of Ribosomal RNA small subunit methyltransferase A from Bifidobacterium adolescentis (strain ATCC 15703 / DSM 20083 / NCTC 11814 / E194a).